A 164-amino-acid polypeptide reads, in one-letter code: Probable ubiquitin-conjugating enzyme E2 7 (164 aa).

The region spanning 3–163 (QSSLLLKKQL…VAQCVRRSQE (161 aa)) is the UBC core domain. Residue C88 is the Glycyl thioester intermediate of the active site.

The protein belongs to the ubiquitin-conjugating enzyme family.

It catalyses the reaction S-ubiquitinyl-[E1 ubiquitin-activating enzyme]-L-cysteine + [E2 ubiquitin-conjugating enzyme]-L-cysteine = [E1 ubiquitin-activating enzyme]-L-cysteine + S-ubiquitinyl-[E2 ubiquitin-conjugating enzyme]-L-cysteine.. It participates in protein modification; protein ubiquitination. Its function is as follows. Catalyzes the covalent attachment of ubiquitin to other proteins. The protein is Probable ubiquitin-conjugating enzyme E2 7 (ubc-7) of Caenorhabditis elegans.